Here is a 358-residue protein sequence, read N- to C-terminus: Methylthioribose-1-phosphate isomerase (358 aa).

Residues 54–56, R96, and Q205 contribute to the substrate site; that span reads RGA. D246 functions as the Proton donor in the catalytic mechanism. 256–257 contributes to the substrate binding site; that stretch reads NK.

It belongs to the eIF-2B alpha/beta/delta subunits family. MtnA subfamily.

The catalysed reaction is 5-(methylsulfanyl)-alpha-D-ribose 1-phosphate = 5-(methylsulfanyl)-D-ribulose 1-phosphate. Its pathway is amino-acid biosynthesis; L-methionine biosynthesis via salvage pathway; L-methionine from S-methyl-5-thio-alpha-D-ribose 1-phosphate: step 1/6. In terms of biological role, catalyzes the interconversion of methylthioribose-1-phosphate (MTR-1-P) into methylthioribulose-1-phosphate (MTRu-1-P). In Pseudomonas fluorescens (strain Pf0-1), this protein is Methylthioribose-1-phosphate isomerase.